The sequence spans 24 residues: Cryptonin (24 aa).

In terms of biological role, antimicrobial peptide, active against the Gram-negative bacterium E.coli K12-594 (MIC=3.12 ug/ml), the Gram-positive bacteria B.subtilis KCTC 3086 (MIC=3.12 ug/ml), S.aureus KCTC 1928 (MIC=25 ug/ml) and M.luteus KCTC 3063 (MIC=1.56 ug/ml), the antibiotic resistant bacteria methicillin-resistant S.aureus (MRSA) (MIC=25 ug/ml) and vancomycin-resistant Enterococci (VRE) (MIC=25 ug/ml), and the fungi C.albicans KCTC 7965 (MIC=50 ug/ml) and C.tropicalis KCTC 1925 (MIC=3.12 ug/ml). Has very low hemolytic activity on rat erythrocytes. The sequence is that of Cryptonin from Cryptotympana dubia (Korean horse cicada).